The primary structure comprises 338 residues: MYKNWRELIKPKRLQVDADSLSDTYGKFMAEPFERGFGTTLGNSLRRVLLSSLQGAAITSVRIKGVLHEFSNIPGVTEDVTDIILNLKGVLLKLHGSDSRNIRIVKKGAGVITAADIITDSHVDVLNPDHHILTCGKDADIELDMVVAMGKGYVPAERNRDDKAPVGTIPIDSLFSPVKKVNFTVTNARVGQITDYDKLILEVLTDGSVRPDDGVAYAAKILKEQLQIFINFDEETETVVEEESEESRKINENLYRSVEELELSVRSANCLKNANIHLIGDLVQRSEAEMLKTQNFGRKSLNEIKDILAEMGLSLGMMLENFPDPEYLKMIQEGKEDL.

Positions 1-233 (MYKNWRELIK…EQLQIFINFD (233 aa)) are alpha N-terminal domain (alpha-NTD). Residues 250-338 (INENLYRSVE…KMIQEGKEDL (89 aa)) form an alpha C-terminal domain (alpha-CTD) region.

The protein belongs to the RNA polymerase alpha chain family. Homodimer. The RNAP catalytic core consists of 2 alpha, 1 beta, 1 beta' and 1 omega subunit. When a sigma factor is associated with the core the holoenzyme is formed, which can initiate transcription.

It carries out the reaction RNA(n) + a ribonucleoside 5'-triphosphate = RNA(n+1) + diphosphate. In terms of biological role, DNA-dependent RNA polymerase catalyzes the transcription of DNA into RNA using the four ribonucleoside triphosphates as substrates. The sequence is that of DNA-directed RNA polymerase subunit alpha from Syntrophotalea carbinolica (strain DSM 2380 / NBRC 103641 / GraBd1) (Pelobacter carbinolicus).